We begin with the raw amino-acid sequence, 153 residues long: MQVLTTSRKPGRKTRRFAKVLARFFNWKYVNRGKLSLEDLAGIAERFWIISEVKGNPAILNLYERGEKTLEVSFTLSNVNKIKMDDSPAVFKGKAPIDPLVFGAIPQTKAGLKLTRKVEFRKKVVVKGDEWLFFYDDEMLFKLRILKISRSSR.

The 153-residue stretch at 1-153 (MQVLTTSRKP…RILKISRSSR (153 aa)) folds into the Brix domain.

Functionally, probably involved in the biogenesis of the ribosome. This chain is Probable Brix domain-containing ribosomal biogenesis protein, found in Archaeoglobus fulgidus (strain ATCC 49558 / DSM 4304 / JCM 9628 / NBRC 100126 / VC-16).